A 754-amino-acid chain; its full sequence is Nibrin (754 aa).

The FHA domain occupies 24–83 (YVVGRKNCAILIENDQSISRNHAVLTANFSVTNLSQTDEIPVLTLKDNSKYGTFVNEEKM). 2 consecutive BRCT domains span residues 105–181 (KFRI…TEFL) and 224–315 (GKTF…LAVI). Residues 111 to 328 (EPLVACSSCL…TKNYCDPQGH (218 aa)) are mediates interaction with SP100. The tract at residues 221 to 402 (IFKGKTFIFL…FRMLSQDAPT (182 aa)) is interaction with MTOR, MAPKAP1 and RICTOR. Serine 278 carries the post-translational modification Phosphoserine; by ATM. The interval 326–346 (QGHPSTGLKTTTPGPSLSQGV) is disordered. The span at 328–346 (HPSTGLKTTTPGPSLSQGV) shows a compositional bias: polar residues. Threonine 337 carries the phosphothreonine modification. A Phosphoserine; by ATM modification is found at serine 343. Serine 347 is subject to Phosphoserine. Residue lysine 388 is modified to N6-lactoyllysine. Disordered stretches follow at residues 396–415 (LSQD…NNNS) and 430–478 (QLSP…MSSC). A Phosphoserine modification is found at serine 397. Threonine 402 is modified (phosphothreonine). Composition is skewed to polar residues over residues 430–440 (QLSPTKLPSIN) and 447–462 (SQQQ…FQPS). A Phosphoserine; by CDK2 modification is found at serine 432. Residue lysine 435 forms a Glycyl lysine isopeptide (Lys-Gly) (interchain with G-Cter in ubiquitin) linkage. Residues 461 to 467 (PSTKKRE) carry the Nuclear localization signal motif. Phosphoserine occurs at positions 509 and 518. Glycyl lysine isopeptide (Lys-Gly) (interchain with G-Cter in SUMO2) cross-links involve residues lysine 529, lysine 571, and lysine 582. Phosphoserine is present on residues serine 615 and serine 673. Residues lysine 686, lysine 690, and lysine 735 each participate in a glycyl lysine isopeptide (Lys-Gly) (interchain with G-Cter in ubiquitin) cross-link. A FxF/Y motif motif is present at residues 740–749 (ADDLFRYNPY).

The protein belongs to the Nibrin family. In terms of assembly, component of the MRN complex composed of two heterodimers RAD50 and MRE11 associated with a single NBN. The MRN complexes dimerize on DNA to form joined MRN-MRN oligomers required for DNA double-strand break repair. As part of the MRN complex, interacts with MCM9; the interaction recruits the complex to DNA repair sites. Component of the BASC complex, at least composed of BRCA1, MSH2, MSH6, MLH1, ATM, BLM, RAD50, MRE11 and NBN. Interacts with histone H2AX; this requires phosphorylation of H2AX on 'Ser-139' and promotes NBN recruitment to DNA damage sites. Interacts with (phosphorylated) MDC1; promoting NBN recruitment to DNA damage sites. Interacts with (phosphorylated) RAD17; promoting NBN recruitment to DNA damage sites. Interacts (via FxF/Y motif) with ATM. Interacts with HJURP. Interacts with INTS3. Interacts with KPNA2. Interacts with TERF2; interaction is disrupted upon NBN phosphorylation by CDK2. Interacts with (phosphorylated) RBBP8/CtIP; the interaction links the role of the MRN complex in DNA double-strand break sensing to resection. Interacts with SP100; recruits NBN to PML bodies. Interacts with ATF2. Interacts with MTOR, MAPKAP1 isoform 2 and RICTOR; indicative for an association with the mTORC2 complex. Interacts with MRNIP. Interacts with UFL1; promoting UFL1 recruitment to double-strand breaks following DNA damage. Interacts with CYREN (via XLF motif). (Microbial infection) Interacts with herpes simplex virus 1 protein UL12. Phosphorylated by ATM in response of ionizing radiation, and such phosphorylation is responsible intra-S phase checkpoint control and telomere maintenance. Phosphorylated at Ser-432 by CDK2 in S/G2 phases abolishes interaction with TERF2, enabling DCLRE1B/Apollo recruitment to telomeres. Phosphorylation at Ser-432 in response to dysfunctional telomeres promotes non-homologous end joining repair at telomeres, while dephosphorylation by PPP1CA promotes microhomology-mediated end-joining (MMEJ) repair. In terms of processing, ubiquitinated at Lys-435 via 'Lys-6'-linked ubiquitin chains by RNF8, promoting NBN recruitment to DNA double-strand breaks (DSBs). Ubiquitinated at Lys-686 and Lys-689 via 'Lys-63'-linked ubiquitin chains by PELI1: ubiquitination takes place following PELI1 phosphorylation and promotes ATM activation and DNA repair. Ubiquitinated at Lys-735 via 'Lys-63'-linked ubiquitin chains by the SCF(SKP2) complex: ubiquitination takes place following SKP2 phosphorylation and promotes ATM activation and DNA repair. Post-translationally, lactylation at Lys-388 by KAT5 in response to DNA damage promotes recruitment of the MRN complex to DNA damage sites. Delactylated by HDAC3. In terms of tissue distribution, ubiquitous. Expressed at high levels in testis.

It localises to the nucleus. Its subcellular location is the chromosome. The protein localises to the PML body. The protein resides in the telomere. Component of the MRN complex, which plays a central role in double-strand break (DSB) repair, DNA recombination, maintenance of telomere integrity and meiosis. The MRN complex is involved in the repair of DNA double-strand breaks (DSBs) via homologous recombination (HR), an error-free mechanism which primarily occurs during S and G2 phases. The complex (1) mediates the end resection of damaged DNA, which generates proper single-stranded DNA, a key initial steps in HR, and is (2) required for the recruitment of other repair factors and efficient activation of ATM and ATR upon DNA damage. The MRN complex possesses single-strand endonuclease activity and double-strand-specific 3'-5' exonuclease activity, which are provided by MRE11, to initiate end resection, which is required for single-strand invasion and recombination. Within the MRN complex, NBN acts as a protein-protein adapter, which specifically recognizes and binds phosphorylated proteins, promoting their recruitment to DNA damage sites. Recruits MRE11 and RAD50 components of the MRN complex to DSBs in response to DNA damage. Promotes the recruitment of PI3/PI4-kinase family members ATM, ATR, and probably DNA-PKcs to the DNA damage sites, activating their functions. Mediates the recruitment of phosphorylated RBBP8/CtIP to DSBs, leading to cooperation between the MRN complex and RBBP8/CtIP to initiate end resection. RBBP8/CtIP specifically promotes the endonuclease activity of the MRN complex to clear DNA ends containing protein adducts. The MRN complex is also required for the processing of R-loops. NBN also functions in telomere length maintenance via its interaction with TERF2: interaction with TERF2 during G1 phase preventing recruitment of DCLRE1B/Apollo to telomeres. NBN also promotes DNA repair choice at dysfunctional telomeres: NBN phosphorylation by CDK2 promotes non-homologous end joining repair at telomeres, while unphosphorylated NBN promotes microhomology-mediated end-joining (MMEJ) repair. Enhances AKT1 phosphorylation possibly by association with the mTORC2 complex. This is Nibrin from Homo sapiens (Human).